The primary structure comprises 149 residues: MEQTYVMVKPDGVQRGLVGEVISRIEKRGLKILALRMNVIAEATAKEHYGEHAARPFFPSLIEFITSGPSVSMVVAGKDAIKVMRAINGATNPVDAAPGTIRGDFALDVGRNVVHASDSPEAAAREIAIHFKDSEIGKYSRVDEVCLYE.

Residues Lys-9, Phe-57, Arg-85, Thr-91, Arg-102, and Asn-112 each contribute to the ATP site. His-115 serves as the catalytic Pros-phosphohistidine intermediate.

This sequence belongs to the NDK family. Requires Mg(2+) as cofactor.

The protein resides in the cytoplasm. The enzyme catalyses a 2'-deoxyribonucleoside 5'-diphosphate + ATP = a 2'-deoxyribonucleoside 5'-triphosphate + ADP. It carries out the reaction a ribonucleoside 5'-diphosphate + ATP = a ribonucleoside 5'-triphosphate + ADP. Major role in the synthesis of nucleoside triphosphates other than ATP. The ATP gamma phosphate is transferred to the NDP beta phosphate via a ping-pong mechanism, using a phosphorylated active-site intermediate. The protein is Nucleoside diphosphate kinase of Methanosarcina acetivorans (strain ATCC 35395 / DSM 2834 / JCM 12185 / C2A).